A 52-amino-acid chain; its full sequence is Alpha-crystallin B chain (52 aa).

This sequence belongs to the small heat shock protein (HSP20) family. As to quaternary structure, homodimer. Aggregates with homologous proteins, including alpha-A-crystallin and the small heat shock protein HSPB1, to form large heteromeric complexes.

May contribute to the transparency and refractive index of the lens. The chain is Alpha-crystallin B chain (CRYAB) from Trachemys scripta elegans (Red-eared slider turtle).